Here is a 506-residue protein sequence, read N- to C-terminus: Radiation-sensitive protein 28 (506 aa).

WD repeat units follow at residues 55–94 (PLSI…HRND), 193–233 (HHKY…AVQD), 285–325 (RMQS…RLYS), 357–396 (AHLR…LQPE), and 404–451 (LGTQ…LWNK).

The protein resides in the nucleus. Its function is as follows. Involved in transcription-coupled repair nucleotide excision repair (NER) of UV-induced DNA lesions. This chain is Radiation-sensitive protein 28 (RAD28), found in Saccharomyces cerevisiae (strain ATCC 204508 / S288c) (Baker's yeast).